The following is a 95-amino-acid chain: Aspartyl/glutamyl-tRNA(Asn/Gln) amidotransferase subunit C (95 aa).

This sequence belongs to the GatC family. As to quaternary structure, heterotrimer of A, B and C subunits.

The catalysed reaction is L-glutamyl-tRNA(Gln) + L-glutamine + ATP + H2O = L-glutaminyl-tRNA(Gln) + L-glutamate + ADP + phosphate + H(+). It carries out the reaction L-aspartyl-tRNA(Asn) + L-glutamine + ATP + H2O = L-asparaginyl-tRNA(Asn) + L-glutamate + ADP + phosphate + 2 H(+). In terms of biological role, allows the formation of correctly charged Asn-tRNA(Asn) or Gln-tRNA(Gln) through the transamidation of misacylated Asp-tRNA(Asn) or Glu-tRNA(Gln) in organisms which lack either or both of asparaginyl-tRNA or glutaminyl-tRNA synthetases. The reaction takes place in the presence of glutamine and ATP through an activated phospho-Asp-tRNA(Asn) or phospho-Glu-tRNA(Gln). The polypeptide is Aspartyl/glutamyl-tRNA(Asn/Gln) amidotransferase subunit C (Maricaulis maris (strain MCS10) (Caulobacter maris)).